The chain runs to 178 residues: uncharacterized protein (178 aa).

The tract at residues 1-89 (MSAKEGSSHP…GEKKGKTEKL (89 aa)) is disordered. Composition is skewed to basic and acidic residues over residues 44–53 (PYQKNEKVVV) and 61–89 (AFLH…TEKL).

This is an uncharacterized protein from Schizosaccharomyces pombe (strain 972 / ATCC 24843) (Fission yeast).